The sequence spans 628 residues: Carbon monoxide dehydrogenase 1 (628 aa).

6 residues coordinate [4Fe-4S] cluster: Cys44, Cys52, Cys53, Cys56, Cys61, and Cys75. Residues His266, Cys302, Cys340, Cys448, Cys478, and Cys519 each coordinate [Ni-4Fe-5S] cluster.

Belongs to the Ni-containing carbon monoxide dehydrogenase family. Homodimer. [4Fe-4S] cluster serves as cofactor. It depends on [Ni-4Fe-5S] cluster as a cofactor.

The enzyme catalyses CO + 2 oxidized [2Fe-2S]-[ferredoxin] + H2O = 2 reduced [2Fe-2S]-[ferredoxin] + CO2 + 2 H(+). Its function is as follows. CODH oxidizes carbon monoxide coupled, via CooF, to the reduction of a hydrogen cation by a hydrogenase (possibly CooH). In Methanosarcina mazei (strain ATCC BAA-159 / DSM 3647 / Goe1 / Go1 / JCM 11833 / OCM 88) (Methanosarcina frisia), this protein is Carbon monoxide dehydrogenase 1 (cooS1).